The chain runs to 27 residues: Allergen C-C (27 aa).

Belongs to the protease inhibitor I6 (cereal trypsin/alpha-amylase inhibitor) family.

It is found in the secreted. The polypeptide is Allergen C-C (Triticum aestivum (Wheat)).